The primary structure comprises 477 residues: Cysteine--tRNA ligase (477 aa).

A Zn(2+)-binding site is contributed by C29. The 'HIGH' region motif lies at 31 to 41; it reads PTVQASPHIGH. Positions 219, 244, and 248 each coordinate Zn(2+). The 'KMSKS' region motif lies at 275 to 279; the sequence is KMSKS. Position 278 (K278) interacts with ATP.

It belongs to the class-I aminoacyl-tRNA synthetase family. Monomer. Zn(2+) serves as cofactor.

The protein resides in the cytoplasm. It catalyses the reaction tRNA(Cys) + L-cysteine + ATP = L-cysteinyl-tRNA(Cys) + AMP + diphosphate. This is Cysteine--tRNA ligase from Leifsonia xyli subsp. xyli (strain CTCB07).